A 714-amino-acid chain; its full sequence is Polyribonucleotide nucleotidyltransferase (714 aa).

Asp-496 and Asp-502 together coordinate Mg(2+). The KH domain occupies 562–621; that stretch reads PRLLTIKIDPDLIGMVIGPGGKTIKGITEQTRAKVDIADDGTVTIASSESENAEKAKRLI. An S1 motif domain is found at 631–699; it reads GDVYFGKVTR…NKGRINLTRL (69 aa).

It belongs to the polyribonucleotide nucleotidyltransferase family. The cofactor is Mg(2+).

The protein localises to the cytoplasm. The enzyme catalyses RNA(n+1) + phosphate = RNA(n) + a ribonucleoside 5'-diphosphate. In terms of biological role, involved in mRNA degradation. Catalyzes the phosphorolysis of single-stranded polyribonucleotides processively in the 3'- to 5'-direction. In Picosynechococcus sp. (strain ATCC 27264 / PCC 7002 / PR-6) (Agmenellum quadruplicatum), this protein is Polyribonucleotide nucleotidyltransferase.